The following is a 293-amino-acid chain: Inhibitory synaptic factor 1 (293 aa).

The tract at residues 1–26 (MNIRGAPDLGQPSDDPSSGGERERIR) is disordered. The stretch at 30–63 (KMVIGQLEGILRELKEVAKELREVVSQIDKLTSD) forms a coiled coil. 2 disordered regions span residues 120–186 (TPSD…RERV) and 200–293 (DDEE…RGKN). Polar residues predominate over residues 171–180 (VKSQLPQRTP). Residues 200–215 (DDEEGDGEQEVEEEEV) are compositionally biased toward acidic residues. 2 stretches are compositionally biased toward polar residues: residues 243–256 (SPLT…TLAP) and 264–286 (RNSS…TATR).

Belongs to the INSYN1 family. Interacts with GPHN.

It localises to the postsynaptic density. Component of the protein machinery at the inhibitory synapses, probably acting as a scaffold. Inhibitory synapses dampen neuronal activity through postsynaptic hyperpolarization. This synaptic inhibition is fundamental for the functioning of the central nervous system, shaping and orchestrating the flow of information through neuronal networks to generate a precise neural code. In Homo sapiens (Human), this protein is Inhibitory synaptic factor 1.